A 541-amino-acid polypeptide reads, in one-letter code: Long-chain-fatty-acid--CoA ligase (541 aa).

Thr-184 contacts Mg(2+). Residues Val-231 and Trp-234 each coordinate ATP. The tetradecanoyl-AMP site is built by Gly-302, Gln-322, Gly-323, and Thr-327. Residues Gly-323 and Thr-327 each coordinate ATP. Mg(2+) is bound at residue Glu-328. The ATP site is built by Asp-418, Lys-435, Lys-439, and Trp-444. The tetradecanoyl-AMP site is built by Asp-418, Lys-435, and Lys-439.

This sequence belongs to the ATP-dependent AMP-binding enzyme family. In terms of assembly, forms a domain swapped homodimer. Mg(2+) serves as cofactor.

It carries out the reaction a long-chain fatty acid + ATP + CoA = a long-chain fatty acyl-CoA + AMP + diphosphate. The catalysed reaction is tetradecanoate + ATP + CoA = tetradecanoyl-CoA + AMP + diphosphate. It catalyses the reaction hexadecanoate + ATP + CoA = hexadecanoyl-CoA + AMP + diphosphate. Its pathway is lipid metabolism; fatty acid metabolism. In terms of biological role, catalyzes the esterification of a number of long chain fatty acids with CoA, resulting in the formation of long-chain fatty acyl-CoA. Myristate (C14) is the most efficiently processed fatty acid, followed by palmitate (C16). Also catalyzes the esterification of stearate (C18) and laurate (C12), but at lower efficiency. Does not catalyze the esterification of the unsaturated fatty acids mysteroleic and palmitoleic acids in vitro. This Thermus thermophilus (strain ATCC 27634 / DSM 579 / HB8) protein is Long-chain-fatty-acid--CoA ligase.